The sequence spans 158 residues: S-ribosylhomocysteine lyase (158 aa).

3 residues coordinate Fe cation: histidine 54, histidine 58, and cysteine 125.

It belongs to the LuxS family. Homodimer. Requires Fe cation as cofactor.

The enzyme catalyses S-(5-deoxy-D-ribos-5-yl)-L-homocysteine = (S)-4,5-dihydroxypentane-2,3-dione + L-homocysteine. Functionally, involved in the synthesis of autoinducer 2 (AI-2) which is secreted by bacteria and is used to communicate both the cell density and the metabolic potential of the environment. The regulation of gene expression in response to changes in cell density is called quorum sensing. Catalyzes the transformation of S-ribosylhomocysteine (RHC) to homocysteine (HC) and 4,5-dihydroxy-2,3-pentadione (DPD). The sequence is that of S-ribosylhomocysteine lyase from Lactococcus lactis subsp. cremoris (strain MG1363).